Here is a 629-residue protein sequence, read N- to C-terminus: Phosphomethylpyrimidine synthase (629 aa).

A disordered region spans residues 1–20; that stretch reads MSTTLKNAAHLSESAQVDSG. Substrate contacts are provided by residues Asn233, Met262, Tyr291, His327, 347-349, 388-391, and Glu427; these read SRG and DGLR. His431 provides a ligand contact to Zn(2+). Residue Tyr454 coordinates substrate. His495 serves as a coordination point for Zn(2+). The [4Fe-4S] cluster site is built by Cys575, Cys578, and Cys583.

This sequence belongs to the ThiC family. As to quaternary structure, homodimer. [4Fe-4S] cluster is required as a cofactor.

The catalysed reaction is 5-amino-1-(5-phospho-beta-D-ribosyl)imidazole + S-adenosyl-L-methionine = 4-amino-2-methyl-5-(phosphooxymethyl)pyrimidine + CO + 5'-deoxyadenosine + formate + L-methionine + 3 H(+). Its pathway is cofactor biosynthesis; thiamine diphosphate biosynthesis. In terms of biological role, catalyzes the synthesis of the hydroxymethylpyrimidine phosphate (HMP-P) moiety of thiamine from aminoimidazole ribotide (AIR) in a radical S-adenosyl-L-methionine (SAM)-dependent reaction. The protein is Phosphomethylpyrimidine synthase of Pseudomonas savastanoi pv. phaseolicola (strain 1448A / Race 6) (Pseudomonas syringae pv. phaseolicola (strain 1448A / Race 6)).